Consider the following 428-residue polypeptide: CRISPR system endoribonuclease Csm6 (428 aa).

The tract at residues 1-145 is CARF domain; it reads MKILISAVGT…RANREYTALT (145 aa). Residues 146–428 are HEPN domain; it reads ESEIDALIME…QNKELIKMLE (283 aa).

This sequence belongs to the CRISPR-associated Csm6 family. In terms of assembly, homodimer. The composite ssRNase active site is formed at the dimer interface.

Non-specific ssRNase activity is allosterically activated about 1000-fold by cyclic hexaadenylate (cA6), a second messenger produced by Cas10 of the ternary Csm effector complex in the presence of a cognate target RNA. ssRNase activity is inhibited by physiological concentrations of ATP (1 mM), activity is restored by cOA. Its function is as follows. CRISPR (clustered regularly interspaced short palindromic repeat) is an adaptive immune system that provides protection against mobile genetic elements (viruses, transposable elements and conjugative plasmids). CRISPR clusters contain spacers, sequences complementary to antecedent mobile elements, and target invading nucleic acids. CRISPR clusters are transcribed and processed into CRISPR RNA (crRNA). The type III-A Csm complex binds crRNA and acts as a crRNA-guided RNase, DNase and cyclic oligoadenylate synthase; binding of target RNA cognate to the crRNA is required for all activities. In a heterologous host this Csm effector complex restricts ssRNA phage MS2, suggesting it may target RNA viruses in vivo. This protein is not part of the Csm complex. Csm functions as a non-specific ssDNase. Base-pairing between crRNA and target RNA to form a ternary Csm complex activates a ssDNase activity; target RNA cleavage suppresses the ssDNase, a temporal control that prevents uncontrolled DNA degradation. Viral RNA transcripts probably tether the Csm complex to the viral genome, recruiting Cas10 ssDNA activity which is able to degrade DNA in the transcription bubble, spatially controlling the DNase activity. In terms of biological role, a single-strand-specific endoribonuclease (ssRNase) that is approximately 1000-fold stimulated by cyclic oligoadenylate (cOA); although several species of cOA are synthesized by this organism only cyclic hexaadenylate (cA6) stimulates the ssRNase activity. Cleaves preferentially within GA or AA dinucleotides, although the presence of cA6 broadens the preference. Linear oligoadenylates do not activate the RNase. The protein is CRISPR system endoribonuclease Csm6 of Streptococcus thermophilus.